Here is a 279-residue protein sequence, read N- to C-terminus: Tetra-spanning protein 1 (279 aa).

2 consecutive transmembrane segments (helical) span residues 25 to 45 (VWFS…LQAI) and 50 to 70 (APPF…AIVL). N-linked (GlcNAc...) asparagine glycosylation is present at Asn-77. A helical transmembrane segment spans residues 100 to 122 (YFILALSMLIDRPILFSLAPYAI). N-linked (GlcNAc...) asparagine glycosylation occurs at Asn-143. Residues 172–192 (MQLVASLETFLLFRLFFGVFL) form a helical membrane-spanning segment. A disordered region spans residues 260 to 279 (VGTAQSRPTASSSTTAPSST). Positions 262–279 (TAQSRPTASSSTTAPSST) are enriched in low complexity.

The protein belongs to the PER33/POM33 family. As to quaternary structure, interacts with RTN1 and YOP1.

The protein localises to the golgi apparatus membrane. It is found in the endoplasmic reticulum membrane. It localises to the nucleus membrane. Required for the correct positioning of the cellular division plane by delimiting the actomyosin ring assembly at the cell equator. This is Tetra-spanning protein 1 (tts1) from Schizosaccharomyces pombe (strain 972 / ATCC 24843) (Fission yeast).